Reading from the N-terminus, the 254-residue chain is Dihydroorotate dehydrogenase B (NAD(+)), electron transfer subunit (254 aa).

One can recognise an FAD-binding FR-type domain in the interval 1–99 (MLQTEMKVIQ…LGPLGKGFDI (99 aa)). Residues 50 to 53 (RPIS), 67 to 69 (LYR), and 74 to 75 (GT) each bind FAD. Positions 218, 223, 226, and 241 each coordinate [2Fe-2S] cluster.

It belongs to the PyrK family. Heterotetramer of 2 PyrK and 2 PyrD type B subunits. Requires [2Fe-2S] cluster as cofactor. FAD serves as cofactor.

It functions in the pathway pyrimidine metabolism; UMP biosynthesis via de novo pathway; orotate from (S)-dihydroorotate (NAD(+) route): step 1/1. In terms of biological role, responsible for channeling the electrons from the oxidation of dihydroorotate from the FMN redox center in the PyrD type B subunit to the ultimate electron acceptor NAD(+). The protein is Dihydroorotate dehydrogenase B (NAD(+)), electron transfer subunit of Listeria monocytogenes serovar 1/2a (strain ATCC BAA-679 / EGD-e).